We begin with the raw amino-acid sequence, 267 residues long: 5'-nucleotidase SurE (267 aa).

The a divalent metal cation site is built by aspartate 9, aspartate 10, serine 40, and asparagine 97.

It belongs to the SurE nucleotidase family. It depends on a divalent metal cation as a cofactor.

It localises to the cytoplasm. The catalysed reaction is a ribonucleoside 5'-phosphate + H2O = a ribonucleoside + phosphate. Its function is as follows. Nucleotidase that shows phosphatase activity on nucleoside 5'-monophosphates. In Helicobacter pylori (strain HPAG1), this protein is 5'-nucleotidase SurE.